The primary structure comprises 444 residues: Probable glycine dehydrogenase (decarboxylating) subunit 1 (444 aa).

It belongs to the GcvP family. N-terminal subunit subfamily. In terms of assembly, the glycine cleavage system is composed of four proteins: P, T, L and H. In this organism, the P 'protein' is a heterodimer of two subunits.

The enzyme catalyses N(6)-[(R)-lipoyl]-L-lysyl-[glycine-cleavage complex H protein] + glycine + H(+) = N(6)-[(R)-S(8)-aminomethyldihydrolipoyl]-L-lysyl-[glycine-cleavage complex H protein] + CO2. In terms of biological role, the glycine cleavage system catalyzes the degradation of glycine. The P protein binds the alpha-amino group of glycine through its pyridoxal phosphate cofactor; CO(2) is released and the remaining methylamine moiety is then transferred to the lipoamide cofactor of the H protein. The chain is Probable glycine dehydrogenase (decarboxylating) subunit 1 from Chlorobium luteolum (strain DSM 273 / BCRC 81028 / 2530) (Pelodictyon luteolum).